The following is a 713-amino-acid chain: MVLNKVTYKINAYKIKEEFIPKEVHFYRIKSFVNEAFNFYRFVNFYGGMIINKKDKSFVLPYKVDNKVLKYKDGNNEIPIDIEYIKSLKLEYVKPEIAEKLVRGYLKSVHKIEPELSRIIKNIRKHKVVENIKVESYCEYEVKKHDGDYYLILNFRHTASITKHLWDFVNRDKALLEEYVGKKIIFKPNPKVRYTISLVDAPNPQKIEEIMSHIIKYYKWSEDMVKSTFGEIDYNQPIMYCEEILEPFAPQFCNLVFYMDELDSYILKELQSYWRLSNENKGKIINEIAKKLRFIDNTPKELEFMKFNNTPLLVKDVNKNPTKIYSTNTLFTWIYNQNAKIYLPYDVPEIIRNKNLLTYILIDEEIKDELKAIKDKVNKMFRNYNKIANKTELPKFNYANRWKYFSTDDIRGIIKEIKSEFNDEICFALIIGKEKYKDNDYYEILKKQLFDLKIISQNILWENWRKDDKGYMTNNLLIQIMGKLGIKYFILDSKTPYDYIMGLDTGLGIFGNHRVGGCTVVYDSEGKIRRIQPIETPAPGERLHLPYVIEYLENKANIDMENKNILFLRDGFIQNSERNDLKEISKELNSNIEVISIRKNNKYKVFTSDYRIGSVFGNDGIFLPHKTPFGSNPVKLSTWLRFNCGNEEGLKINESIMQLLYDLTKMNYSALYGEGRYLRIPAPIHYADKFVKALGKNWKIDEELLKHGFLYFI.

The N-terminal domain stretch occupies residues 18–129; that stretch reads EFIPKEVHFY…IKNIRKHKVV (112 aa). The PAZ domain occupies 164-257; it reads HLWDFVNRDK…FAPQFCNLVF (94 aa). Positions 213 to 218 are binds 3'-end of gDNA; it reads HIIKYY. Positions 346–488 are mid domain; sequence DVPEIIRNKN…QIMGKLGIKY (143 aa). The Piwi domain maps to 426–699; the sequence is CFALIIGKEK…FVKALGKNWK (274 aa). A divalent metal cation is bound by residues Gln457, Gln479, and Lys483. The tract at residues 457 to 460 is binds 5'-phosphorylated end of gDNA; that stretch reads QNIL. Residues Asp504, Glu541, and Asp570 contribute to the active site. Asp504 contributes to the Mn(2+) binding site. Residue Asp570 coordinates Mn(2+). 2 binds 5'-phosphorylated end of gDNA regions span residues 625-632 and 678-679; these read HKTPFGSN and LR. The active site involves Asp688. Mn(2+) contacts are provided by Asp688 and Ile713.

The protein belongs to the argonaute family. Long pAgo subfamily. A divalent metal cation is required as a cofactor.

Its activity is regulated as follows. DNA cleavage is inhibited by EDTA. Functionally, a DNA-guided ssDNA endonuclease that may play a role in defense against invading genetic elements. Uses short ssDNA sequences as guides (gDNA) to bind complementary target strands, resulting in slicing of the target DNA (tDNA). Endonucleolytically cleaves tDNA (the gDNA indicates where to cleave); two major and two minor products are seen which correspond to cleavage sites between nucleotides 9/10, 10/11, 13/14, and 14/15 downstream of the target residue base-paired with the 5'-end of the gDNA. Efficient guide-dependent tDNA cleavage requires a minimal length of 15 bp and is maximal at 19 bp. Prefers gDNA with 5'-phosphorylated purines and 3'-pyrimidines; changing these bases alters the cleavage activity and patterns. Also has guide-independent activity on tDNA called 'chopping'. Probably a first round of guide-independent activity on an invading plasmid or virus would generate guide DNAs for subsequent, more efficient, guide-dependent degradation of invading nucleic acids. Has no activity on substrate with a mismatch at positions 10 and 11, on ssDNA or RNA, nor on DNA:RNA hybrids. Digests longer (750 bp) dsDNA as well as circular plasmid and naked genomic DNA, but not chromatin, in a guide DNA-independent manner. Addition of endogenous histone A3 protects DNA from cleavage, while cleavage is insensitive to methylation. When plasmid encoding active or mutated protein (Ala-541) is transformed into Sulfolobus acidocaldarius about 25-fold fewer transformants are found with active protein; reduced levels of plasmid are found in wild-type transformed cells. While S.acidocaldarius grows at a similar temperature to M.jannaschii (70 to 80 degrees Celsius) it has very different histone-like proteins, which presumably do not protect against MjAgo. Binds ssDNA, dsDNA and DNA-RNA hybrids; binding is most efficient with dsDNA. This chain is Protein argonaute, found in Methanocaldococcus jannaschii (strain ATCC 43067 / DSM 2661 / JAL-1 / JCM 10045 / NBRC 100440) (Methanococcus jannaschii).